Reading from the N-terminus, the 90-residue chain is Delta-aiptatoxin-Adi1a (90 aa).

The first 21 residues, 1-21, serve as a signal peptide directing secretion; sequence MKTAMLIAVLGFCAALCFVES. Residues 22-44 constitute a propeptide that is removed on maturation; sequence SHEEEREAAVYLTDLVSKAESAI. 3 cysteine pairs are disulfide-bonded: C50–C86, C52–C77, and C70–C87.

The protein belongs to the sea anemone sodium channel inhibitory toxin family.

Its subcellular location is the secreted. The protein resides in the nematocyst. In terms of biological role, cardioactive peptide that acts on voltage-gated sodium channels (hNav1.5/SCN5A) and voltage-gated potassium channels (Kv). The activity on sodium channels consists of inhibition on sodium current inactivation with no significant effect on current activation. This effect may be caused by direct interaction of the toxin with sodium channel site-3. The activity on potassium channels consists of a significant increase of the amplitude of the transient component of the potassium current, shifting the current threshold to more negative membrane potentials. These effects are concentration-dependent and reversible and may be due to a direct interaction between the toxin and the voltage-sensing domain of the channel. Physiologically, this toxin increases the amplitude of cardiomyocyte contraction and slows the late phase of the twitch relaxation velocity with no induction of spontaneous twitching. It increases action potential duration of cardiomyocytes with no effect on its threshold and on the cell resting potential. On insects, it shows neurotoxic activity to the blowfly larvae S.falculaty, causing an immediate spasm that progressed to body contraction and paralysis. This is Delta-aiptatoxin-Adi1a from Exaiptasia diaphana (Tropical sea anemone).